The primary structure comprises 146 residues: Hemoglobin subunit beta (146 aa).

Val-1 is modified (N-acetylvaline). In terms of domain architecture, Globin spans 2–146 (HLTAAEKSAI…VANALAHKYH (145 aa)). His-63 serves as a coordination point for heme b. Lys-82 bears the N6-acetyllysine mark. Residue His-92 participates in heme b binding. Residue Cys-93 is modified to S-nitrosocysteine. Lys-144 carries the post-translational modification N6-acetyllysine.

The protein belongs to the globin family. In terms of assembly, heterotetramer of two alpha chains and two beta chains. Red blood cells.

Involved in oxygen transport from the lung to the various peripheral tissues. The polypeptide is Hemoglobin subunit beta (HBB) (Cavia porcellus (Guinea pig)).